A 165-amino-acid chain; its full sequence is NADPH-dependent 7-cyano-7-deazaguanine reductase (165 aa).

Catalysis depends on C56, which acts as the Thioimide intermediate. The Proton donor role is filled by D63. Substrate is bound by residues 78-80 (VES) and 97-98 (HE).

The protein belongs to the GTP cyclohydrolase I family. QueF type 1 subfamily.

Its subcellular location is the cytoplasm. It catalyses the reaction 7-aminomethyl-7-carbaguanine + 2 NADP(+) = 7-cyano-7-deazaguanine + 2 NADPH + 3 H(+). It participates in tRNA modification; tRNA-queuosine biosynthesis. Its function is as follows. Catalyzes the NADPH-dependent reduction of 7-cyano-7-deazaguanine (preQ0) to 7-aminomethyl-7-deazaguanine (preQ1). In Bacillus cereus (strain ATCC 14579 / DSM 31 / CCUG 7414 / JCM 2152 / NBRC 15305 / NCIMB 9373 / NCTC 2599 / NRRL B-3711), this protein is NADPH-dependent 7-cyano-7-deazaguanine reductase.